The sequence spans 1378 residues: S-cell enriched with leucine-rich repeat-containing protein slrA (1378 aa).

The helical transmembrane segment at 17–37 (IFKILYCYLFTSLLLILSTWV) threads the bilayer. Residues asparagine 59, asparagine 112, asparagine 143, asparagine 172, and asparagine 201 are each glycosylated (N-linked (GlcNAc...) asparagine). LRR repeat units lie at residues 143–165 (NLTG…LPYL), 167–188 (HLRN…GLLK), 191–212 (SLVA…ADSK), 213–235 (AISY…WKTP), 236–257 (NLLF…EFFR), 260–281 (SLDY…LSKS), 282–304 (RISY…TCWK), 307–329 (SLRI…IFDH), and 331–353 (PLQY…LDCA). Residues asparagine 265, asparagine 287, and asparagine 296 are each glycosylated (N-linked (GlcNAc...) asparagine). Asparagine 416, asparagine 436, asparagine 451, asparagine 491, asparagine 513, asparagine 596, asparagine 605, asparagine 634, asparagine 704, asparagine 710, asparagine 740, asparagine 741, asparagine 771, asparagine 788, asparagine 801, asparagine 826, asparagine 843, asparagine 861, asparagine 875, and asparagine 907 each carry an N-linked (GlcNAc...) asparagine glycan. A coiled-coil region spans residues 886–946 (SLNNNNNNNN…NNNENNNENK (61 aa)). Positions 891–909 (NNNNNNNNNKNNNNNNNDS) are enriched in low complexity. The tract at residues 891-945 (NNNNNNNNNKNNNNNNNDSNNEKEVVEDEEEDLDYSSQNDNNNINNNNNENNNEN) is disordered. Residues 915–924 (VVEDEEEDLD) are compositionally biased toward acidic residues. Positions 929-945 (NDNNNINNNNNENNNEN) are enriched in low complexity. N-linked (GlcNAc...) asparagine glycosylation is found at asparagine 953, asparagine 970, asparagine 1090, and asparagine 1100. The helical transmembrane segment at 1160-1180 (YYIVFFGCASGLILVLVICIV) threads the bilayer. Positions 1227–1276 (DLNNNNNNNNNNNNNNNNNNNNNNNNNNNNNNNNNFNDGSDTFNNNNKKN) are enriched in low complexity. The disordered stretch occupies residues 1227 to 1378 (DLNNNNNNNN…KKHLTIINKK (152 aa)). Over residues 1289–1304 (DGKENDIKNINNKKDE) the composition is skewed to basic and acidic residues. Residues 1305-1324 (KEDDGDDDDDEDDDEYEDDT) are compositionally biased toward acidic residues. A compositionally biased stretch (low complexity) spans 1328–1353 (SSGNSSRSKGSDGGSSSNSLSSDKQS). N-linked (GlcNAc...) asparagine glycosylation is found at asparagine 1331 and asparagine 1360. Over residues 1354–1364 (FNNGNENNSII) the composition is skewed to polar residues. Basic residues predominate over residues 1368-1378 (KKKHLTIINKK).

The protein resides in the membrane. This chain is S-cell enriched with leucine-rich repeat-containing protein slrA (slrA), found in Dictyostelium discoideum (Social amoeba).